Consider the following 225-residue polypeptide: Transmembrane protein 40 (225 aa).

At M1 the chain carries N-acetylmethionine. Residues 1–14 (MEASGSSSQSQDSG) show a composition bias toward low complexity. A disordered region spans residues 1-96 (MEASGSSSQS…RRDSLRGADH (96 aa)). Residues 15 to 29 (GVHRETEDHYQETEL) show a composition bias toward basic and acidic residues. The span at 30 to 39 (HKHHGKARER) shows a compositional bias: basic residues. Residues 46–68 (SSSSSSSSSSSSSSSSSSSSSSD) show a composition bias toward low complexity. A compositionally biased stretch (basic residues) spans 78-87 (GPRKHRRRPR). A Phosphoserine modification is found at S129. Helical transmembrane passes span 152-172 (FFHF…YHYY) and 179-199 (LGVG…FGLV).

Its subcellular location is the membrane. This chain is Transmembrane protein 40 (Tmem40), found in Mus musculus (Mouse).